Reading from the N-terminus, the 782-residue chain is Ribosome biogenesis protein ERB1 (782 aa).

The segment covering 1-11 (MSVNSRKRKVA) has biased composition (basic residues). The interval 1–120 (MSVNSRKRKV…LEGEEDESLK (120 aa)) is disordered. Composition is skewed to acidic residues over residues 39–51 (DESEDDQDAEDTD) and 59–75 (LSDEDFEDEEDSGDEAE). Polar residues predominate over residues 82–92 (RNLNTSGGSQQ). The segment covering 106 to 117 (GADGELEGEEDE) has biased composition (acidic residues). 2 WD repeats span residues 432 to 471 (GQEGRVRCVSVDPQGIFVASGGDDGYVRIWELLTGRQVWN) and 475 to 516 (SDEE…PDVE). Residues 533–556 (KPSTAANGEAPKQSPGKWSRPGSR) form a disordered region. WD repeat units follow at residues 612–652 (RLKG…KILQ), 653–692 (PGAKWISSIDVHPGGDNIIVGTYDKRLLWHDLDLSNKPYK), 696–736 (FHKE…DLME), and 752–782 (KSRLGVMDLDWHPREPWCVSAGADGTLRLWN).

The protein belongs to the WD repeat BOP1/ERB1 family. As to quaternary structure, component of the NOP7 complex, composed of ERB1, NOP7 and YTM1. The complex is held together by ERB1, which interacts with NOP7 via its N-terminal domain and with YTM1 via a high-affinity interaction between the seven-bladed beta-propeller domains of the 2 proteins. The NOP7 complex associates with the 66S pre-ribosome.

The protein localises to the nucleus. The protein resides in the nucleolus. Its subcellular location is the nucleoplasm. Functionally, component of the NOP7 complex, which is required for maturation of the 25S and 5.8S ribosomal RNAs and formation of the 60S ribosome. The protein is Ribosome biogenesis protein ERB1 of Phaeosphaeria nodorum (strain SN15 / ATCC MYA-4574 / FGSC 10173) (Glume blotch fungus).